The sequence spans 880 residues: MNKLIYYFGNNGSDGNASMKNILGNKGAGLAEMSNLKLPIPNGFTITTELCNYFYKHNNNLPKNFQNELQQAITKLEITTGKIFGSTTSNPLLLSVRSGSTVSMPGMMDTILNLGMNNEVCNALADSCGNKLFALDSYRRFLEMYGSTVLSIPSDLFEQIYEKHKVQADIYKDSDITVELLEKIIDDFKRLHIKYTKQLIKDPYEQLESAIKAVLYSWKNNRAIVYRKLNNISEDFGTAINIQEMVFGNLGKTSATGVVFTRSPSTGEKKLFGEFLINAQGEDIVSGTRTPMPIIANDSNSMQAMMPEVFTKLSQIAKKLEEHYLDMQDIEFTIENNKLYILQTRTAKRTAIAAINIAVQMVEEKLISKEQALMRIDPESLNQLLHTRIDYSKKLTAIAEGLPASPGAATGIVVFSPYDAEKLSHHHKVILVRHDTSPEDINGMHVASGILTIRGGMTSHAAVVARGMGKPCVCGTNNLSIDEQKQILIAGDIVIKQGDIITIDGGSGKIFLGEMPLIQPTFSEESTLILDWADEISSLKVRANAETVNDALVSIKFGAQGIGLCRSEHMFFDKNKIPLVREMIIAPDIERRQCALQKLLPLQTEDFKALFRVMKNKPVNIRLLDPPLHEFLPTTDEDKKNLAHSLNLPLSMIHQRLHAMHEVNPMLGHRGCRLGICLPEIYQMQIEAILTAIFELHKKEHIESNLELMIPLISNVAEIKKLKMDIYAVVKKLEQRYSYKFSFTLGTMIELPRAALGSKKIAKEVDYFSFGTNDLTQTTYGISRDDIASFLPYYLEEKIFESDPFTTLDEEGVGELIKIAIKRGKSSNANLKLGACGEHAGNPTSIAFFHKMNLNYVSCSPYRIPIARIAAAQAKIKQGS.

The N-terminal stretch occupies residues 1–348 (MNKLIYYFGN…LYILQTRTAK (348 aa)). Arg-97 is an ATP binding site. Residues 349–405 (RTAIAAINIAVQMVEEKLISKEQALMRIDPESLNQLLHTRIDYSKKLTAIAEGLPAS) form a linker 1 region. The segment at 406–503 (PGAATGIVVF…VIKQGDIITI (98 aa)) is central. Residue Thr-458 is modified to Phosphothreonine; by PDRP1. Residue His-460 is the Tele-phosphohistidine intermediate of the active site. The tract at residues 504 to 538 (DGGSGKIFLGEMPLIQPTFSEESTLILDWADEISS) is linker 2. Positions 539–879 (LKVRANAETV…AAAQAKIKQG (341 aa)) are C-terminal. Residues Arg-566, Arg-622, Glu-750, Gly-771, Thr-772, Asn-773, and Asp-774 each contribute to the substrate site. Mg(2+) is bound at residue Glu-750. Residue Asp-774 coordinates Mg(2+). Cys-836 (proton donor) is an active-site residue.

Belongs to the PEP-utilizing enzyme family. As to quaternary structure, homodimer. The cofactor is Mg(2+). In terms of processing, phosphorylation of Thr-458 in the dark inactivates the enzyme. Dephosphorylation upon light stimulation reactivates the enzyme.

It catalyses the reaction pyruvate + phosphate + ATP = phosphoenolpyruvate + AMP + diphosphate + H(+). Activated by light-induced dephosphorylation. Inhibited by dark-induced phosphorylation. Both reactions are catalyzed by PDRP1. Functionally, catalyzes the reversible phosphorylation of pyruvate and phosphate. This is Pyruvate, phosphate dikinase (ppdK) from Rickettsia typhi (strain ATCC VR-144 / Wilmington).